Here is a 309-residue protein sequence, read N- to C-terminus: Interferon-inducible double-stranded RNA-dependent protein kinase activator A homolog A (309 aa).

The tract at residues 1 to 22 (MSQERFPAAPKMSSEKPTSLDA) is disordered. 3 DRBM domains span residues 31–98 (TPIQ…ILRG), 123–191 (NPVG…KFKT), and 236–304 (DYVK…YLKI).

It belongs to the PRKRA family. As to quaternary structure, homodimer. Interacts with dicer1 and eif2ak2/pkr. Also able to interact with dsRNA.

It localises to the cytoplasm. Its subcellular location is the perinuclear region. It is found in the nucleus. Functionally, activates eif2ak2/pkr in the absence of double-stranded RNA (dsRNA), leading to phosphorylation of eif2s1/efi2-alpha and inhibition of translation and induction of apoptosis. Required for siRNA production by dicer1 and for subsequent siRNA-mediated post-transcriptional gene silencing. Does not seem to be required for processing of pre-miRNA to miRNA by dicer1. This chain is Interferon-inducible double-stranded RNA-dependent protein kinase activator A homolog A (prkra-a), found in Xenopus laevis (African clawed frog).